We begin with the raw amino-acid sequence, 288 residues long: Diaminopimelate epimerase (288 aa).

Substrate is bound by residues Asn-14 and Asn-67. The Proton donor role is filled by Cys-76. Substrate-binding positions include 77–78 (GN), Asn-166, Asn-199, and 217–218 (ER). Catalysis depends on Cys-226, which acts as the Proton acceptor. Substrate is bound at residue 227-228 (GT).

The protein belongs to the diaminopimelate epimerase family. As to quaternary structure, homodimer.

Its subcellular location is the cytoplasm. The catalysed reaction is (2S,6S)-2,6-diaminopimelate = meso-2,6-diaminopimelate. It functions in the pathway amino-acid biosynthesis; L-lysine biosynthesis via DAP pathway; DL-2,6-diaminopimelate from LL-2,6-diaminopimelate: step 1/1. Functionally, catalyzes the stereoinversion of LL-2,6-diaminopimelate (L,L-DAP) to meso-diaminopimelate (meso-DAP), a precursor of L-lysine and an essential component of the bacterial peptidoglycan. The protein is Diaminopimelate epimerase of Bacillus cereus (strain ATCC 14579 / DSM 31 / CCUG 7414 / JCM 2152 / NBRC 15305 / NCIMB 9373 / NCTC 2599 / NRRL B-3711).